The sequence spans 101 residues: Urease subunit beta (101 aa).

This sequence belongs to the urease beta subunit family. Heterotrimer of UreA (gamma), UreB (beta) and UreC (alpha) subunits. Three heterotrimers associate to form the active enzyme.

Its subcellular location is the cytoplasm. The catalysed reaction is urea + 2 H2O + H(+) = hydrogencarbonate + 2 NH4(+). It participates in nitrogen metabolism; urea degradation; CO(2) and NH(3) from urea (urease route): step 1/1. This chain is Urease subunit beta, found in Ralstonia nicotianae (strain ATCC BAA-1114 / GMI1000) (Ralstonia solanacearum).